A 424-amino-acid polypeptide reads, in one-letter code: Homeobox-containing protein 1 (424 aa).

One can recognise an HNF-p1 domain in the interval 1–30 (MLFTIEQLELIKKLQHTGMSSDQLLKAFGE). The POU-specific atypical domain maps to 103-199 (SQRTPMKEIT…PNKLAAFLAD (97 aa)). The segment at residues 215-291 (QRRERYVFRP…NKRKELRRRS (77 aa)) is a DNA-binding region (homeobox). The segment at 291-345 (SAEASAASTSSASSSASSTANHDSVSVSSMSPRDEETSSRNTTPETAISPSPAVS) is disordered. Low complexity predominate over residues 293–310 (EASAASTSSASSSASSTA). Polar residues-rich tracts occupy residues 311 to 321 (NHDSVSVSSMS) and 329 to 345 (SRNTTPETAISPSPAVS).

It belongs to the HMBOX1 homeobox family. In terms of tissue distribution, expressed in both AWC neurons. Also expressed in the FLP mechanosensory neurons.

The protein resides in the nucleus. Its function is as follows. Transcriptional repressor which maintains cell fate asymmetry of AWC neurons in adults by repressing the expression of multiple AWC (OFF) genes, including srsx-3 in the AWC (ON) neuron. The sequence is that of Homeobox-containing protein 1 from Caenorhabditis elegans.